The following is a 542-amino-acid chain: uncharacterized protein (542 aa).

Residues K256–E275 are disordered. Low complexity predominate over residues S258–T269.

This is an uncharacterized protein from Caenorhabditis elegans.